The following is a 255-amino-acid chain: MDRVSERVERGHYIPVENQTESSTSRVTVEGRKLTYRMSVLQQPVRARACGQGAKCKSPSADRRPVDPPPIVELKIFEGEDQENDITFTMHANYFLFATLEQARPIANGRVSNERSTPVLTGTPVAGMVYLDRPTPAGYFIFPDLSVRHEGVYRLSFSLYEDCKSPKDEDKTEEGAKSESDAHVTHRLEVKSEPFNVFSAKKFPGLTESTSLSRMVAEQGCRVRIRRDVRMRKRETKPGGREWDNYEDETAQARA.

One can recognise a Velvet domain in the interval 31-226 (GRKLTYRMSV…AEQGCRVRIR (196 aa)). Positions 45-50 (VRARAC) match the Nuclear localization signal motif. Disordered regions lie at residues 163-184 (CKSP…DAHV) and 229-255 (VRMR…QARA). Over residues 245–255 (NYEDETAQARA) the composition is skewed to acidic residues.

This sequence belongs to the velvet family. VeA subfamily. In terms of assembly, component of the heterotrimeric velvet complex composed of LAE1, MVE1 and VEL2; MVE1 acting as a bridging protein between LAE1 and VEL2.

It is found in the nucleus. The protein localises to the cytoplasm. Component of the velvet transcription factor complex that controls sexual/asexual developmental ratio in response to light, promoting sexual development in the darkness while stimulating asexual sporulation under illumination. The velvet complex hat acts as a global regulator for secondary metabolite gene expression. Controls the expression of the melanin gene cluster. Mediates the light-stimulated formation of aerial mycelia. The sequence is that of Developmental and secondary metabolism regulator MVE1 from Zymoseptoria tritici (strain CBS 115943 / IPO323) (Speckled leaf blotch fungus).